Consider the following 207-residue polypeptide: Ankyrin repeat-containing protein P1E11.10 (207 aa).

ANK repeat units lie at residues 36 to 65 and 69 to 98; these read NGYTPIHAAVSYGHSDLLKILVERGGDINI and DGETPLFVCEKLEIAHDLINQYNADTTVKN.

Its subcellular location is the cytoplasm. It localises to the nucleus. This Schizosaccharomyces pombe (strain 972 / ATCC 24843) (Fission yeast) protein is Ankyrin repeat-containing protein P1E11.10.